A 349-amino-acid chain; its full sequence is tRNA pseudouridine synthase D (349 aa).

F26 is a binding site for substrate. The active-site Nucleophile is D79. N128 contacts substrate. Residues 154 to 303 (GVPNYFGSQR…VDAARRAMLV (150 aa)) enclose the TRUD domain. F329 serves as a coordination point for substrate.

This sequence belongs to the pseudouridine synthase TruD family.

It carries out the reaction uridine(13) in tRNA = pseudouridine(13) in tRNA. Functionally, responsible for synthesis of pseudouridine from uracil-13 in transfer RNAs. The polypeptide is tRNA pseudouridine synthase D (Erwinia tasmaniensis (strain DSM 17950 / CFBP 7177 / CIP 109463 / NCPPB 4357 / Et1/99)).